A 113-amino-acid chain; its full sequence is Large ribosomal subunit protein P1 (113 aa).

Over residues 56 to 66 (TAAAAPAPAAG) the composition is skewed to low complexity. The disordered stretch occupies residues 56-113 (TAAAAPAPAAGGSAGGEVEAADDDDEEDAEEEAADEGGDDDGDDDEEADGEGLGALFG). Residues 74–105 (EAADDDDEEDAEEEAADEGGDDDGDDDEEADG) show a composition bias toward acidic residues.

It belongs to the eukaryotic ribosomal protein P1/P2 family. As to quaternary structure, part of the 50S ribosomal subunit. Homodimer, it forms part of the ribosomal stalk which helps the ribosome interact with GTP-bound translation factors. Forms a heptameric uL10/P0(P1)2(P1)2(P1)2 complex, where uL10/P0 forms an elongated spine to which the P1 dimers bind in a sequential fashion.

In terms of biological role, forms part of the ribosomal stalk, playing a central role in the interaction of the ribosome with GTP-bound translation factors. The polypeptide is Large ribosomal subunit protein P1 (Haloferax volcanii (strain ATCC 29605 / DSM 3757 / JCM 8879 / NBRC 14742 / NCIMB 2012 / VKM B-1768 / DS2) (Halobacterium volcanii)).